Consider the following 345-residue polypeptide: D-erythrose-4-phosphate dehydrogenase (345 aa).

11–12 provides a ligand contact to NAD(+); sequence RI. Residues 158 to 160, Arg-204, 217 to 218, and Arg-240 each bind substrate; these read SCT and TK. Catalysis depends on Cys-159, which acts as the Nucleophile. Asn-322 contributes to the NAD(+) binding site.

It belongs to the glyceraldehyde-3-phosphate dehydrogenase family. Epd subfamily. In terms of assembly, homotetramer.

Its subcellular location is the cytoplasm. The enzyme catalyses D-erythrose 4-phosphate + NAD(+) + H2O = 4-phospho-D-erythronate + NADH + 2 H(+). It functions in the pathway cofactor biosynthesis; pyridoxine 5'-phosphate biosynthesis; pyridoxine 5'-phosphate from D-erythrose 4-phosphate: step 1/5. Functionally, catalyzes the NAD-dependent conversion of D-erythrose 4-phosphate to 4-phosphoerythronate. In Vibrio campbellii (strain ATCC BAA-1116), this protein is D-erythrose-4-phosphate dehydrogenase.